Consider the following 208-residue polypeptide: MAKNYYDITLAMAGISQTARLVQQLAHEGQCDREAFHTSLSSLLQMDPPSTLAVFGGEERNLKMGLETLMGVLNANNKGLAAELTRYTISLMVLERKLNANKQAMNQLGERLGQLERQLAHFDLESDTIISALAGIYVDVVSPLGPRIQVTGSPAILQNPQVQAKVRAALLAGIRAAVLWQQVGGSRLQLMFSRNRLFKQAQNIVAHC.

The stretch at 91–125 forms a coiled coil; sequence LMVLERKLNANKQAMNQLGERLGQLERQLAHFDLE.

Belongs to the HflD family.

Its subcellular location is the cytoplasm. The protein resides in the cell inner membrane. The chain is High frequency lysogenization protein HflD homolog from Serratia proteamaculans (strain 568).